A 337-amino-acid chain; its full sequence is Heat-inducible transcription repressor HrcA (337 aa).

It belongs to the HrcA family.

Negative regulator of class I heat shock genes (grpE-dnaK-dnaJ and groELS operons). Prevents heat-shock induction of these operons. In Metamycoplasma arthritidis (strain 158L3-1) (Mycoplasma arthritidis), this protein is Heat-inducible transcription repressor HrcA.